The sequence spans 147 residues: Small ribosomal subunit protein bS16m (147 aa).

It belongs to the bacterial ribosomal protein bS16 family. As to quaternary structure, component of the mitochondrial ribosome small subunit (28S) which comprises a 12S rRNA and about 30 distinct proteins.

The protein resides in the mitochondrion. The protein is Small ribosomal subunit protein bS16m (mrps-16) of Caenorhabditis elegans.